Reading from the N-terminus, the 857-residue chain is Bifunctional uridylyltransferase/uridylyl-removing enzyme (857 aa).

The interval Met-1 to Glu-322 is uridylyltransferase. The interval Ile-323–Leu-679 is uridylyl-removing. The HD domain maps to Val-441–Leu-563. 2 ACT domains span residues Gln-680–Gln-760 and Leu-788–Ile-857.

Belongs to the GlnD family. Requires Mg(2+) as cofactor.

It catalyses the reaction [protein-PII]-L-tyrosine + UTP = [protein-PII]-uridylyl-L-tyrosine + diphosphate. The enzyme catalyses [protein-PII]-uridylyl-L-tyrosine + H2O = [protein-PII]-L-tyrosine + UMP + H(+). Uridylyltransferase (UTase) activity is inhibited by glutamine, while glutamine activates uridylyl-removing (UR) activity. Functionally, modifies, by uridylylation and deuridylylation, the PII regulatory proteins (GlnB and homologs), in response to the nitrogen status of the cell that GlnD senses through the glutamine level. Under low glutamine levels, catalyzes the conversion of the PII proteins and UTP to PII-UMP and PPi, while under higher glutamine levels, GlnD hydrolyzes PII-UMP to PII and UMP (deuridylylation). Thus, controls uridylylation state and activity of the PII proteins, and plays an important role in the regulation of nitrogen assimilation and metabolism. This Cupriavidus metallidurans (strain ATCC 43123 / DSM 2839 / NBRC 102507 / CH34) (Ralstonia metallidurans) protein is Bifunctional uridylyltransferase/uridylyl-removing enzyme.